Reading from the N-terminus, the 705-residue chain is Elongation factor G (705 aa).

The 283-residue stretch at 8–290 folds into the tr-type G domain; that stretch reads HRYRNIGIMA…GVIHLLPSPA (283 aa). GTP is bound by residues 17-24, 88-92, and 142-145; these read AHIDAGKT, DTPGH, and NKMD.

This sequence belongs to the TRAFAC class translation factor GTPase superfamily. Classic translation factor GTPase family. EF-G/EF-2 subfamily.

It is found in the cytoplasm. Functionally, catalyzes the GTP-dependent ribosomal translocation step during translation elongation. During this step, the ribosome changes from the pre-translocational (PRE) to the post-translocational (POST) state as the newly formed A-site-bound peptidyl-tRNA and P-site-bound deacylated tRNA move to the P and E sites, respectively. Catalyzes the coordinated movement of the two tRNA molecules, the mRNA and conformational changes in the ribosome. The polypeptide is Elongation factor G (Xylella fastidiosa (strain M12)).